We begin with the raw amino-acid sequence, 891 residues long: Putative alpha,alpha-trehalose-phosphate synthase [UDP-forming] 100 kDa subunit (891 aa).

Residue Thr88 is modified to Phosphothreonine. The interval 88-126 (TGGSMTPGLGAMSPIPGSGRSSPLYTQPRSRATSPSRVR) is disordered. A compositionally biased stretch (polar residues) spans 106-124 (GRSSPLYTQPRSRATSPSR). 2 positions are modified to phosphoserine: Ser108 and Ser109. The glycosyltransferase stretch occupies residues 132-613 (AAPGIGAGAL…VTGFETKLKK (482 aa)).

This sequence in the N-terminal section; belongs to the glycosyltransferase 20 family.

The catalysed reaction is D-glucose 6-phosphate + UDP-alpha-D-glucose = alpha,alpha-trehalose 6-phosphate + UDP + H(+). This Schizosaccharomyces pombe (strain 972 / ATCC 24843) (Fission yeast) protein is Putative alpha,alpha-trehalose-phosphate synthase [UDP-forming] 100 kDa subunit.